Consider the following 349-residue polypeptide: Sensory histidine kinase/phosphatase NtrB (349 aa).

Residues 5-78 (TQPDAGQILN…SLEAGQGFTD (74 aa)) enclose the PAS domain. A Histidine kinase domain is found at 136–349 (GLAHEIKNPL…EFSVYLPIRK (214 aa)). H139 carries the post-translational modification Phosphohistidine; by autocatalysis. Position 329 (K329) interacts with ATP.

Autophosphorylated.

It localises to the cytoplasm. It catalyses the reaction ATP + protein L-histidine = ADP + protein N-phospho-L-histidine.. Member of the two-component regulatory system NtrB/NtrC, which controls expression of the nitrogen-regulated (ntr) genes in response to nitrogen limitation. Under conditions of nitrogen limitation, NtrB autophosphorylates and transfers the phosphoryl group to NtrC. In the presence of nitrogen, acts as a phosphatase that dephosphorylates and inactivates NtrC. This is Sensory histidine kinase/phosphatase NtrB (glnL) from Escherichia coli O157:H7.